Reading from the N-terminus, the 238-residue chain is Probable transcriptional regulatory protein SSU98_0387 (238 aa).

This sequence belongs to the TACO1 family. YeeN subfamily.

The protein localises to the cytoplasm. The protein is Probable transcriptional regulatory protein SSU98_0387 of Streptococcus suis (strain 98HAH33).